We begin with the raw amino-acid sequence, 261 residues long: Indole-3-glycerol phosphate synthase (261 aa).

It belongs to the TrpC family.

The catalysed reaction is 1-(2-carboxyphenylamino)-1-deoxy-D-ribulose 5-phosphate + H(+) = (1S,2R)-1-C-(indol-3-yl)glycerol 3-phosphate + CO2 + H2O. Its pathway is amino-acid biosynthesis; L-tryptophan biosynthesis; L-tryptophan from chorismate: step 4/5. The chain is Indole-3-glycerol phosphate synthase from Burkholderia pseudomallei (strain 1710b).